The following is a 97-amino-acid chain: Apolipoprotein C-II (97 aa).

Residues 1–22 (MGSRFFLALFLVILMLGNEVQG) form the signal peptide. The tract at residues 63–71 (SMDEKLRDM) is lipid binding. The segment at 75 to 97 (SSAAMSTYAGIFTDQLLTLLRGE) is lipoprotein lipase cofactor.

It belongs to the apolipoprotein C2 family. In terms of tissue distribution, adult and fetal liver, intestine and peritoneal macrophages.

The protein resides in the secreted. Functionally, component of chylomicrons, very low-density lipoproteins (VLDL), low-density lipoproteins (LDL), and high-density lipoproteins (HDL) in plasma. Plays an important role in lipoprotein metabolism as an activator of lipoprotein lipase. This is Apolipoprotein C-II (Apoc2) from Mus musculus (Mouse).